The following is a 130-amino-acid chain: MAKLSTDELLDAFKEMTLLELSDFVKKFEETFEVTAAAPVAVAAAGAAPAGAAVEAAEEQSEFDVILEAAGDKKIGVIKVVREIVSGLGLKEAKDLVDGAPKPLLEKVAKEAADEAKAKLEAAGATVTVK.

The protein belongs to the bacterial ribosomal protein bL12 family. In terms of assembly, homodimer. Part of the ribosomal stalk of the 50S ribosomal subunit. Forms a multimeric L10(L12)X complex, where L10 forms an elongated spine to which 2 to 4 L12 dimers bind in a sequential fashion. Binds GTP-bound translation factors.

Forms part of the ribosomal stalk which helps the ribosome interact with GTP-bound translation factors. Is thus essential for accurate translation. This is Large ribosomal subunit protein bL12 from Mycobacterium bovis (strain ATCC BAA-935 / AF2122/97).